Here is a 1389-residue protein sequence, read N- to C-terminus: Carboxypeptidase D (1389 aa).

A signal peptide spans 1–25 (MAGAARGLLWAALSLCLLPEPLRAA). Topologically, residues 26–1308 (HIKKAEAAAA…ENRIFGLPRE (1283 aa)) are extracellular. Residues 46–383 (RYLHAAELGQ…ESLLTFIEKV (338 aa)) form the Peptidase M14 1 domain. The tract at residues 95-133 (LPEARQDGEKKKKEEEEEEEEEEGEEGGGGALPGRPQVK) is disordered. Residues 96–108 (PEARQDGEKKKKE) show a composition bias toward basic and acidic residues. Residues 109–120 (EEEEEEEEEGEE) are compositionally biased toward acidic residues. Positions 139 and 142 each coordinate Zn(2+). N-linked (GlcNAc...) asparagine glycosylation occurs at asparagine 172. Positions 188-235 (ERAREGDCGGGGGGGGEGGGEPGGRENSRGRDLNRSFPDQFGSAQPDL) are disordered. Over residues 195 to 209 (CGGGGGGGGEGGGEP) the composition is skewed to gly residues. Basic and acidic residues predominate over residues 210-221 (GGRENSRGRDLN). Asparagine 221 carries an N-linked (GlcNAc...) asparagine glycan. Histidine 260 contributes to the Zn(2+) binding site. The Proton donor/acceptor role is filled by glutamate 353. Asparagine 402, asparagine 413, asparagine 432, and asparagine 472 each carry an N-linked (GlcNAc...) asparagine glycan. The 291-residue stretch at 511–801 (RHHHFSDMEI…RSLLQFIKQV (291 aa)) folds into the Peptidase M14 2 domain. Zn(2+)-binding residues include histidine 573 and glutamate 576. Residues 614–639 (SMNPDGYEKSQEGDRGGTVGRNNSNN) are disordered. The segment covering 619-628 (GYEKSQEGDR) has biased composition (basic and acidic residues). Asparagine 635 carries an N-linked (GlcNAc...) asparagine glycan. A Zn(2+)-binding site is contributed by histidine 680. Catalysis depends on glutamate 771, which acts as the Proton donor/acceptor. Asparagine 820, asparagine 876, asparagine 958, asparagine 981, asparagine 1073, and asparagine 1151 each carry an N-linked (GlcNAc...) asparagine glycan. Residues 935–1220 (RYRPYKDLSE…KSLLSMLVEV (286 aa)) enclose the Peptidase M14 3 domain. The chain crosses the membrane as a helical span at residues 1309–1329 (LVVTVAGASMSALVLTACIIW). 3 S-palmitoyl cysteine lipidation sites follow: cysteine 1326, cysteine 1330, and cysteine 1332. At 1330-1389 (CVCSIKSNRHKDGFPTLRQHHDDYEDEIRMMSTGSKKSLLSHEFQDETDTEEETLYSSKH) the chain is on the cytoplasmic side. Residues 1367–1389 (SLLSHEFQDETDTEEETLYSSKH) are disordered.

Belongs to the peptidase M14 family. As to quaternary structure, binds to pre-S, hepatitis B virus large envelope protein, via the carboxypeptidase-like domain. It depends on Zn(2+) as a cofactor. The N-terminus is blocked. Expressed in liver, lung, kidney, heart, stomach, pancreas, spleen, gall bladder and intestine, but not in skeletal muscle.

It is found in the cell membrane. It carries out the reaction Releases C-terminal Arg and Lys from polypeptides.. This is Carboxypeptidase D (CPD) from Anas platyrhynchos (Mallard).